The chain runs to 273 residues: Diaminopimelate epimerase (273 aa).

Asparagine 11 and asparagine 60 together coordinate substrate. The active-site Proton donor is the cysteine 69. Residues 70 to 71, asparagine 181, and 199 to 200 each bind substrate; these read GN and ER. Cysteine 209 serves as the catalytic Proton acceptor. Residue 210–211 participates in substrate binding; it reads GT.

The protein belongs to the diaminopimelate epimerase family. As to quaternary structure, homodimer.

It is found in the cytoplasm. It carries out the reaction (2S,6S)-2,6-diaminopimelate = meso-2,6-diaminopimelate. The protein operates within amino-acid biosynthesis; L-lysine biosynthesis via DAP pathway; DL-2,6-diaminopimelate from LL-2,6-diaminopimelate: step 1/1. Catalyzes the stereoinversion of LL-2,6-diaminopimelate (L,L-DAP) to meso-diaminopimelate (meso-DAP), a precursor of L-lysine and an essential component of the bacterial peptidoglycan. The sequence is that of Diaminopimelate epimerase from Helicobacter pylori (strain HPAG1).